We begin with the raw amino-acid sequence, 162 residues long: NADH-quinone oxidoreductase subunit I (162 aa).

2 4Fe-4S ferredoxin-type domains span residues 52–82 (LRRYPNGEERCIACKLCEAICPAQAITIEAG) and 93–122 (TRYDIDMVKCIYCGFCQEACPVDAIVEGPN). Residues Cys-62, Cys-65, Cys-68, Cys-72, Cys-102, Cys-105, Cys-108, and Cys-112 each contribute to the [4Fe-4S] cluster site.

The protein belongs to the complex I 23 kDa subunit family. In terms of assembly, NDH-1 is composed of 14 different subunits. Subunits NuoA, H, J, K, L, M, N constitute the membrane sector of the complex. It depends on [4Fe-4S] cluster as a cofactor.

It localises to the cell inner membrane. The catalysed reaction is a quinone + NADH + 5 H(+)(in) = a quinol + NAD(+) + 4 H(+)(out). NDH-1 shuttles electrons from NADH, via FMN and iron-sulfur (Fe-S) centers, to quinones in the respiratory chain. The immediate electron acceptor for the enzyme in this species is believed to be ubiquinone. Couples the redox reaction to proton translocation (for every two electrons transferred, four hydrogen ions are translocated across the cytoplasmic membrane), and thus conserves the redox energy in a proton gradient. The protein is NADH-quinone oxidoreductase subunit I of Methylocella silvestris (strain DSM 15510 / CIP 108128 / LMG 27833 / NCIMB 13906 / BL2).